Reading from the N-terminus, the 234-residue chain is Large ribosomal subunit protein uL1 (234 aa).

The protein belongs to the universal ribosomal protein uL1 family. Part of the 50S ribosomal subunit.

Binds directly to 23S rRNA. The L1 stalk is quite mobile in the ribosome, and is involved in E site tRNA release. Its function is as follows. Protein L1 is also a translational repressor protein, it controls the translation of the L11 operon by binding to its mRNA. This is Large ribosomal subunit protein uL1 from Pectobacterium atrosepticum (strain SCRI 1043 / ATCC BAA-672) (Erwinia carotovora subsp. atroseptica).